The sequence spans 822 residues: Protein smoothened (822 aa).

A signal peptide spans 1-28 (MSSKRPCSIVGSFWMLWIWTATSMVARA). At 29-212 (VILHPNETIF…EDEHSDMHSY (184 aa)) the chain is on the extracellular side. A glycan (N-linked (GlcNAc...) asparagine) is linked at N34. Disulfide bonds link C42–C157, C48–C112, C56–C105, C96–C132, and C125–C147. The FZ domain maps to 43 to 160 (KKSTTCEVLK…EQFPKGCQNE (118 aa)). Cholesterol is bound at residue D73. Residue N167 is glycosylated (N-linked (GlcNAc...) asparagine). Disulfide bonds link C172–C192, C196–C274, and C293–C369. The helical transmembrane segment at 213 to 233 (IAVFGTITLLCTFFTLATFLA) threads the bilayer. The Cytoplasmic segment spans residues 234–241 (DWKNSNRY). Residues 242–262 (PAVILFYVNACFFIGSIGWLA) form a helical membrane-spanning segment. Residues 263–293 (QFMDGARNEIVCKSDNTMRLGEPSSTETLSC) are Extracellular-facing. The helical transmembrane segment at 294–314 (VIIFVIVYYSLMSGVIWFVML) threads the bilayer. The Cytoplasmic portion of the chain corresponds to 315–335 (TYAWHTSFKALGTTHQPLSGK). The helical transmembrane segment at 336–356 (TSYFHLVTWSIPFILTVAILA) threads the bilayer. Over 357 to 381 (NSQVDADSVSGICFVGYRYYEYRAG) the chain is Extracellular. Y373 is a cholesterol binding site. The helical transmembrane segment at 382 to 402 (FVLAPIGFVLVIGGYFLIRGV) threads the bilayer. Residues 403-430 (MTLFSIKSNHPGLLSEKAASKINETMLR) are Cytoplasmic-facing. The chain crosses the membrane as a helical span at residues 431–451 (LGIFGFLAFGFVLITFGCHFY). The Extracellular segment spans residues 452–503 (DFFNQAEWERSFREYVLCEANVTIAHQTNKPIPECAIKNRPSLLVGKINLFS). An intrachain disulfide couples C469 to C486. A glycan (N-linked (GlcNAc...) asparagine) is linked at N472. Residues 504-524 (MFGTGIAMSTWVWTKATILIW) form a helical membrane-spanning segment. At 525–822 (KRTWFRIIGR…AELLDADSDF (298 aa)) the chain is on the cytoplasmic side. The segment at 645-687 (MMKRKKKKKKRRKEVRPAGPAADEGNPAYHRREFGPSAVPRLP) is disordered. Residues 647–658 (KRKKKKKKRRKE) are compositionally biased toward basic residues.

This sequence belongs to the G-protein coupled receptor Fz/Smo family. Monomer.

It localises to the cell membrane. The protein localises to the cell projection. The protein resides in the cilium. In terms of biological role, g protein-coupled receptor which associates with the patched protein (ptch) to transduce Hedgehog protein signaling. Binding of sonic hedgehog (shh) to its receptor patched prevents inhibition of smoothened (smo) by patched. When active, smo binds to and sequesters protein kinase A catalytic subunit prkaca at the cell membrane, preventing prkaca-mediated phosphorylation of gli transcription factors which releases the gli proteins from prkaca-mediated inhibition and allows for transcriptional activation of Hedgehog signaling pathway target genes. Required for the development of primary and secondary motoneurons but not for the specification of midbrain dopaminergic neurons or development of the medial floor plate. Required for induction of lateral floor plate and posterior motoneurons, anterior neural plate patterning, dorsoventral forebrain patterning, dorsoventral retinal patterning, optic stalk development, and formation of the forebrain primary axonal scaffold. Required to regulate the formation of a subset of cerebellar neurons by limiting wnt1 expression which controls cerebellar expression of transcription factor olig2. Required for development of the pancreas. Required for muscle development. Required for the formation of a single continuous intestinal lumen from multiple discontinuous lumens, probably by regulating remodeling through rab11a-mediated trafficking to facilitate lumen fusion. Required for development of the adenohypophysis. Required for anteroposterior patterning of the otic vesicle. Required for development of the anterior craniofacial skeleton. Required for patterning of the caudal fin. Required during gastrulation and early somitogenesis stages to promote cardiomyocyte formation by regulating the specification of myocardial progenitors. Required for induction of arterial endothelial cell formation by repressing venous cell fate. The polypeptide is Protein smoothened (Danio rerio (Zebrafish)).